Here is a 1431-residue protein sequence, read N- to C-terminus: Probable serine/threonine-protein kinase irlA (1431 aa).

Basic residues predominate over residues 1–10 (MTKPIFKSKT). Disordered regions lie at residues 1–81 (MTKP…EKEE) and 736–879 (KREK…NNNK). Over residues 25 to 43 (NEDEEEEEGGEEGGEEEEI) the composition is skewed to acidic residues. The span at 46-67 (NKNSNNSSSNSNNNNNDNNNNN) shows a compositional bias: low complexity. Coiled coils occupy residues 57–97 (NNNN…LDME) and 715–759 (KKRS…NNNN). Residues 68–81 (GEERKVEKEEEKEE) show a composition bias toward basic and acidic residues. The segment covering 738 to 749 (EKKKQKDKKKNK) has biased composition (basic residues). The segment covering 750 to 776 (SNQNQKNNNNQNNQSNNNKINSPSSNK) has biased composition (low complexity). The span at 777-791 (LTQNVTPPSSPVNII) shows a compositional bias: polar residues. The span at 792-812 (TSSSTTSSSTSSTTSSTTSST) shows a compositional bias: low complexity. Positions 821 to 838 (TLPIKTSSPTKPESQKPS) are enriched in polar residues. Residues 854-878 (NNNNNNNNNNNNNNNNNNNNNNNNN) show a composition bias toward low complexity. The stretch at 860-971 (NNNNNNNNNN…QESIQLNQTL (112 aa)) forms a coiled coil. Residues 987 to 1261 (RDENNIIGRG…IDTILNHPLF (275 aa)) form the Protein kinase domain. Residues 993-1001 (IGRGSNGTL) and Lys-1016 each bind ATP. The active-site Proton acceptor is Asp-1130. The region spanning 1264–1431 (TNEKIKFYES…NSKDYLNIKF (168 aa)) is the KEN domain.

The protein belongs to the protein kinase superfamily. Ser/Thr protein kinase family.

The catalysed reaction is L-seryl-[protein] + ATP = O-phospho-L-seryl-[protein] + ADP + H(+). The enzyme catalyses L-threonyl-[protein] + ATP = O-phospho-L-threonyl-[protein] + ADP + H(+). The sequence is that of Probable serine/threonine-protein kinase irlA (irlA) from Dictyostelium discoideum (Social amoeba).